The primary structure comprises 260 residues: Carbonic anhydrase 3 (260 aa).

N-acetylalanine is present on Ala-2. The Alpha-carbonic anhydrase domain maps to 3–259; that stretch reads KEWGYADHNG…IKGRIVKASF (257 aa). Phosphoserine occurs at positions 29, 43, 50, and 55. The tract at residues 64–67 is involved in proton transfer; the sequence is KTCR. Thr-73 bears the Phosphothreonine mark. Residues His-94, His-96, and His-119 each coordinate Zn(2+). Residue Tyr-127 is modified to Phosphotyrosine. S-glutathionyl cysteine occurs at positions 182 and 187. 198 to 199 is a binding site for substrate; that stretch reads TT. Thr-216 is modified (phosphothreonine). Ser-219 is modified (phosphoserine).

This sequence belongs to the alpha-carbonic anhydrase family. Zn(2+) is required as a cofactor. In terms of processing, S-thiolated both by thiol-disulfide exchange with glutathione disulfide and by oxyradical-initiated S-thiolation with reduced glutathione. S-glutathionylated in hepatocytes under oxidative stress.

It localises to the cytoplasm. It catalyses the reaction hydrogencarbonate + H(+) = CO2 + H2O. Its activity is regulated as follows. Inhibited by acetazolamide. In terms of biological role, reversible hydration of carbon dioxide. This chain is Carbonic anhydrase 3 (CA3), found in Bos taurus (Bovine).